The primary structure comprises 126 residues: Adenosine 5'-monophosphoramidase HINT1 (126 aa).

A2 carries the post-translational modification N-acetylalanine. Residues 18 to 126 (IFGKIIRKEI…GGRQMNWPPG (109 aa)) form the HIT domain. 2 positions are modified to N6-acetyllysine: K21 and K30. AMP is bound at residue 43–44 (DI). Phosphoserine occurs at positions 45 and 72. AMP contacts are provided by residues N99, 105–107 (GQS), and 112–114 (HLH). The Histidine triad motif motif lies at 110 to 114 (HIHLH). The active-site Tele-AMP-histidine intermediate is H112.

Belongs to the HINT family. Homodimer. Interacts with CDK7. Interacts with RUVBL1 and RUVBL2 and is associated with the LEF1/TCF1-CTNNB1 complex and with a KAT5 histone acetyltransferase complex. Identified in a complex with MITF and CTNNB1. Interacts with CDC34 and RBX1, and is part of a SCF (SKP2-CUL1-F-box protein) E3 ubiquitin-protein ligase complex. Interacts with SUMO1, SUMO2 and RGS17. Interacts with the Ten-1 ICD form of TENM1. Interacts with CALM1; interaction increases in the presence of calcium ions.

The protein resides in the cytoplasm. Its subcellular location is the nucleus. It carries out the reaction adenosine 5'-phosphoramidate + H2O = AMP + NH4(+). In terms of biological role, exhibits adenosine 5'-monophosphoramidase activity, hydrolyzing purine nucleotide phosphoramidates with a single phosphate group such as adenosine 5'monophosphoramidate (AMP-NH2) to yield AMP and NH2. Hydrolyzes adenosine 5'monophosphomorpholidate (AMP-morpholidate) and guanosine 5'monophosphomorpholidate (GMP-morpholidate). Hydrolyzes lysyl-AMP (AMP-N-epsilon-(N-alpha-acetyl lysine methyl ester)) generated by lysine tRNA ligase, as well as Met-AMP, His-AMP and Asp-AMP, lysyl-GMP (GMP-N-epsilon-(N-alpha-acetyl lysine methyl ester)) and AMP-N-alanine methyl ester. Can also convert adenosine 5'-O-phosphorothioate and guanosine 5'-O-phosphorothioate to the corresponding nucleoside 5'-O-phosphates with concomitant release of hydrogen sulfide. In addition, functions as a scaffolding protein that modulates transcriptional activation by the LEF1/TCF1-CTNNB1 complex and by the complex formed with MITF and CTNNB1. Modulates p53/TP53 levels and p53/TP53-mediated apoptosis. Modulates proteasomal degradation of target proteins by the SCF (SKP2-CUL1-F-box protein) E3 ubiquitin-protein ligase complex. Also exhibits SUMO-specific isopeptidase activity, deconjugating SUMO1 from RANGAP1 and RGS17. The chain is Adenosine 5'-monophosphoramidase HINT1 (Hint1) from Rattus norvegicus (Rat).